The following is a 384-amino-acid chain: S-adenosylmethionine synthase (384 aa).

H15 provides a ligand contact to ATP. D17 contributes to the Mg(2+) binding site. Residue E43 coordinates K(+). L-methionine contacts are provided by E56 and Q99. Residues 99–109 (QSPDINQGVDK) form a flexible loop region. Residues 164–166 (DAK), 230–231 (RF), D239, 245–246 (RK), A262, and K266 contribute to the ATP site. D239 contributes to the L-methionine binding site. Residue K270 coordinates L-methionine.

This sequence belongs to the AdoMet synthase family. As to quaternary structure, homotetramer; dimer of dimers. Requires Mg(2+) as cofactor. The cofactor is K(+).

It is found in the cytoplasm. The enzyme catalyses L-methionine + ATP + H2O = S-adenosyl-L-methionine + phosphate + diphosphate. It participates in amino-acid biosynthesis; S-adenosyl-L-methionine biosynthesis; S-adenosyl-L-methionine from L-methionine: step 1/1. In terms of biological role, catalyzes the formation of S-adenosylmethionine (AdoMet) from methionine and ATP. The overall synthetic reaction is composed of two sequential steps, AdoMet formation and the subsequent tripolyphosphate hydrolysis which occurs prior to release of AdoMet from the enzyme. This chain is S-adenosylmethionine synthase, found in Vibrio vulnificus (strain YJ016).